Here is a 965-residue protein sequence, read N- to C-terminus: SKI family transcriptional corepressor 1 (965 aa).

Disordered regions lie at residues 45–72, 278–367, 410–458, 530–592, 615–777, and 796–843; these read TQLGPGREGSSSPNSKQELQPYSGSSAL, RTFS…GGGA, DDPV…GGGA, SGAP…GSYV, AYGA…FAPE, and VCTP…EDGL. Composition is skewed to gly residues over residues 283–312, 356–367, and 418–442; these read QGGGGGGANGGSGGQGKGGAGGGGGGGPGC, GPAGPGGPGGGA, and EPKGGPGTGSGGGGAGTGGGAGGPG. Pro residues predominate over residues 571–586; that stretch reads LPPPLAPLPPPPPPPA. Over residues 620-632 the composition is skewed to gly residues; that stretch reads PARGPGPGAGSGG. Residues 641–650 are compositionally biased toward polar residues; that stretch reads EGSSSYNSAS. 2 stretches are compositionally biased toward acidic residues: residues 654–663 and 670–679; these read DTADEPEVDV and DDEDAQEETE. Basic and acidic residues predominate over residues 800 to 823; it reads EAHEPDKEDNHSPADDLETRKSYP. The segment covering 824-835 has biased composition (polar residues); it reads DQRSISQPSPAN. A coiled-coil region spans residues 858–922; it reads ENLAREELQK…DTLCNELDQE (65 aa).

It belongs to the SKI family. As to quaternary structure, interacts with LBX1. Interacts with SMAD1, SMAD2 and SMAD3. In terms of tissue distribution, present specifically in cerebellar Purkinje cells (at protein level).

Its subcellular location is the nucleus. Its function is as follows. Acts as a transcriptional corepressor of LBX1. Inhibits BMP signaling. This Homo sapiens (Human) protein is SKI family transcriptional corepressor 1 (SKOR1).